A 342-amino-acid chain; its full sequence is Signal-regulatory protein beta-2 (342 aa).

The N-terminal stretch at 1–32 (MCSTMSAPTCLAHLPPCFLLLALVLVPSDASG) is a signal peptide. Ig-like V-type domains lie at 33 to 143 (QSSR…KSDE) and 157 to 258 (PDLW…SGQG). At 33 to 287 (QSSRNDWQVL…EPATEMSPTG (255 aa)) the chain is on the extracellular side. Cysteines 60 and 127 form a disulfide. Asn116, Asn179, and Asn231 each carry an N-linked (GlcNAc...) asparagine glycan. A disulfide bridge links Cys180 with Cys242. Residues 288-308 (LLVVFAPVVLGLKAITLAALL) traverse the membrane as a helical segment. At 309-342 (LALATSRRSPGQEDVKTTGPAGAMNTLAWSKGQE) the chain is on the cytoplasmic side. The interval 317-342 (SPGQEDVKTTGPAGAMNTLAWSKGQE) is disordered.

It localises to the membrane. The protein is Signal-regulatory protein beta-2 (SIRPB2) of Homo sapiens (Human).